We begin with the raw amino-acid sequence, 475 residues long: tRNA modification GTPase MnmE (475 aa).

Residues R32, E97, and K136 each contribute to the (6S)-5-formyl-5,6,7,8-tetrahydrofolate site. In terms of domain architecture, TrmE-type G spans 232-396 (GVATVIAGRP…LKSRMSSMVE (165 aa)). GTP is bound by residues 242 to 247 (NAGKST), 261 to 267 (SHMPGTT), 286 to 289 (DTAG), and 377 to 379 (SAR). Mg(2+) contacts are provided by S246 and T267. Residue K475 coordinates (6S)-5-formyl-5,6,7,8-tetrahydrofolate.

The protein belongs to the TRAFAC class TrmE-Era-EngA-EngB-Septin-like GTPase superfamily. TrmE GTPase family. In terms of assembly, homodimer. Heterotetramer of two MnmE and two MnmG subunits. The cofactor is K(+).

The protein localises to the cytoplasm. In terms of biological role, exhibits a very high intrinsic GTPase hydrolysis rate. Involved in the addition of a carboxymethylaminomethyl (cmnm) group at the wobble position (U34) of certain tRNAs, forming tRNA-cmnm(5)s(2)U34. In Chlorobium phaeobacteroides (strain DSM 266 / SMG 266 / 2430), this protein is tRNA modification GTPase MnmE.